Reading from the N-terminus, the 391-residue chain is Trehalose-phosphate phosphatase (391 aa).

Residue aspartate 147 is the Nucleophile of the active site. Mg(2+) is bound by residues aspartate 147, aspartate 149, and aspartate 330. Substrate is bound at residue 147-149; the sequence is DFD.

It belongs to the trehalose phosphatase family. Mg(2+) serves as cofactor.

It carries out the reaction alpha,alpha-trehalose 6-phosphate + H2O = alpha,alpha-trehalose + phosphate. Its pathway is glycan biosynthesis; trehalose biosynthesis. Removes the phosphate from trehalose 6-phosphate to produce free trehalose. This Mycolicibacterium paratuberculosis (strain ATCC BAA-968 / K-10) (Mycobacterium paratuberculosis) protein is Trehalose-phosphate phosphatase (otsB).